The following is a 246-amino-acid chain: Probable 2-phosphosulfolactate phosphatase (246 aa).

This sequence belongs to the ComB family. Mg(2+) is required as a cofactor.

The enzyme catalyses (2R)-O-phospho-3-sulfolactate + H2O = (2R)-3-sulfolactate + phosphate. This chain is Probable 2-phosphosulfolactate phosphatase, found in Synechococcus sp. (strain WH7803).